A 446-amino-acid chain; its full sequence is MSRKYFGTDGIRGRVGEYPITPDFMLKLGWAAGMAFRKQGNCRVLVGKDTRISGYMFESALEAGLSAAGADVLLLGPMPTPAIAYLTRTFHAEAGIVISASHNPHDDNGIKFFSGQGTKLPDEIELMIEELLDQPMTVVDSSKLGKVSRINDAAGRYIEFCKSSVPTSTGFEGLKLVVDCAHGATYKVAPSVFRELGAEVTVLHAQPDGLNINENCGSTHIESLQAAVLVGHADLGIAFDGDGDRVLMVDHTGAIVDGDELLFIIARDLHERGKLQGGVVGTLMSNLGLELALKDLDIPFVRAKVGDRYVMAELLERGWLVGGENSGHVVCCNHTTTGDAIIAALQVLLALRRRGETLAQARQALRKCPQVLINVRFGASKVDPLEHPAVKEASARVTEDMAGRGRVLLRKSGTEPLVRVMVEGDDENQVRTHAEALAKLVAEVCV.

Ser101 (phosphoserine intermediate) is an active-site residue. Positions 101, 240, 242, and 244 each coordinate Mg(2+). Position 101 is a phosphoserine (Ser101).

This sequence belongs to the phosphohexose mutase family. The cofactor is Mg(2+). Activated by phosphorylation.

It carries out the reaction alpha-D-glucosamine 1-phosphate = D-glucosamine 6-phosphate. Its function is as follows. Catalyzes the conversion of glucosamine-6-phosphate to glucosamine-1-phosphate. In Pseudomonas putida (strain W619), this protein is Phosphoglucosamine mutase.